The chain runs to 219 residues: Type-5 uracil-DNA glycosylase (219 aa).

4 residues coordinate [4Fe-4S] cluster: Cys13, Cys16, Cys115, and Cys130.

This sequence belongs to the uracil-DNA glycosylase (UDG) superfamily. Type 5 (UDGb) family.

Functionally, DNA glycosylase with broad substrate specificity. Can remove uracil from double-stranded DNA containing either a U/G, U/A, U/C or U/T base pair. Can also excise hypoxanthine from double-stranded DNA containing G/I, T/I, and A/I base pairs, xanthine from both double-stranded and single stranded DNA, thymine from G/T mismatched DNA, 5'-hydroxymethyluracil and 5'-fluorouracil. The sequence is that of Type-5 uracil-DNA glycosylase from Thermus thermophilus (strain ATCC 27634 / DSM 579 / HB8).